Reading from the N-terminus, the 125-residue chain is Cu-Zn superoxide dismutase-like protein (125 aa).

Cysteines 52 and 102 form a disulfide.

It belongs to the Cu-Zn superoxide dismutase family.

It localises to the host cytoplasm. Functionally, virion protein with no enzymatic activity. This is Cu-Zn superoxide dismutase-like protein from Bos taurus (Bovine).